A 479-amino-acid chain; its full sequence is UDP-N-acetylmuramoyl-L-alanyl-D-glutamate--2,6-diaminopimelate ligase (479 aa).

UDP-N-acetyl-alpha-D-muramoyl-L-alanyl-D-glutamate is bound at residue S21. An ATP-binding site is contributed by 98 to 104 (GTNGKSS). UDP-N-acetyl-alpha-D-muramoyl-L-alanyl-D-glutamate is bound by residues 144-145 (TT), S171, Q177, and R179. K211 carries the N6-carboxylysine modification. Meso-2,6-diaminopimelate-binding positions include R372, 396 to 399 (DNPR), G446, and E450. A Meso-diaminopimelate recognition motif motif is present at residues 396-399 (DNPR).

The protein belongs to the MurCDEF family. MurE subfamily. Requires Mg(2+) as cofactor. Carboxylation is probably crucial for Mg(2+) binding and, consequently, for the gamma-phosphate positioning of ATP.

The protein localises to the cytoplasm. The enzyme catalyses UDP-N-acetyl-alpha-D-muramoyl-L-alanyl-D-glutamate + meso-2,6-diaminopimelate + ATP = UDP-N-acetyl-alpha-D-muramoyl-L-alanyl-gamma-D-glutamyl-meso-2,6-diaminopimelate + ADP + phosphate + H(+). It functions in the pathway cell wall biogenesis; peptidoglycan biosynthesis. Catalyzes the addition of meso-diaminopimelic acid to the nucleotide precursor UDP-N-acetylmuramoyl-L-alanyl-D-glutamate (UMAG) in the biosynthesis of bacterial cell-wall peptidoglycan. This is UDP-N-acetylmuramoyl-L-alanyl-D-glutamate--2,6-diaminopimelate ligase from Rickettsia rickettsii.